A 498-amino-acid polypeptide reads, in one-letter code: Diacylglycerol O-acyltransferase 1A (498 aa).

Residues 1–67 (MAISDEPETV…ANSQPQQKQD (67 aa)) form a disordered region. The next 7 helical transmembrane spans lie at 102 to 122 (HAGLFNLCIVVLVAVNSRLII), 146 to 166 (WPLFMCCLSLVVFPFAAFIVE), 178 to 198 (VVVVLHIIITSASLFYPVLVI), 203 to 223 (SAFLSGVTLMLFACVVWLKLV), 253 to 273 (YPYNVSFKSLAYFLVAPTLCY), 295 to 315 (LIIFTGVMGFIIEQYINPIVQ), and 342 to 362 (VWLCMFYCFFHLWLNILAELL). The FYXDWWN motif signature appears at 369-375 (FYQDWWN). Helical transmembrane passes span 410–430 (AVALLIAFLVSALFHELCIAV), 432–452 (CHIFKLWAFGGIMFQVPLVFI), and 465–485 (VGNMIFWFIFSILGQPMCVLL). H424 is a catalytic residue.

The protein belongs to the membrane-bound acyltransferase family. Sterol o-acyltransferase subfamily. As to expression, highly expressed in flowers and pods. Expressed at low levels in roots, stems and leaves.

It localises to the endoplasmic reticulum membrane. The enzyme catalyses an acyl-CoA + a 1,2-diacyl-sn-glycerol = a triacyl-sn-glycerol + CoA. It functions in the pathway glycerolipid metabolism; triacylglycerol biosynthesis. Major contributor to triacylglycerol (TAG) synthesis and oil accumulation in developing seeds. Catalyzes the acylation of the sn-3 hydroxy group of sn-1,2-diacylglycerol using acyl-CoA. Has a marked preference for oleoyl-CoA (18:1) and sn-1,2-dioleoylglycerol over vernoloyl-CoA and sn-1,2-divernoloylglycerol. Can use oleoyl-CoA, linoleoyl-CoA and linolenoyl-CoA as substrates. This is Diacylglycerol O-acyltransferase 1A from Glycine max (Soybean).